The following is a 233-amino-acid chain: Phosphatidylserine decarboxylase proenzyme (233 aa).

Residue Ser-190 is the Schiff-base intermediate with substrate; via pyruvic acid of the active site. Ser-190 is subject to Pyruvic acid (Ser); by autocatalysis.

Belongs to the phosphatidylserine decarboxylase family. PSD-A subfamily. As to quaternary structure, heterodimer of a large membrane-associated beta subunit and a small pyruvoyl-containing alpha subunit. The cofactor is pyruvate. Post-translationally, is synthesized initially as an inactive proenzyme. Formation of the active enzyme involves a self-maturation process in which the active site pyruvoyl group is generated from an internal serine residue via an autocatalytic post-translational modification. Two non-identical subunits are generated from the proenzyme in this reaction, and the pyruvate is formed at the N-terminus of the alpha chain, which is derived from the carboxyl end of the proenzyme. The post-translation cleavage follows an unusual pathway, termed non-hydrolytic serinolysis, in which the side chain hydroxyl group of the serine supplies its oxygen atom to form the C-terminus of the beta chain, while the remainder of the serine residue undergoes an oxidative deamination to produce ammonia and the pyruvoyl prosthetic group on the alpha chain.

The protein localises to the cell membrane. The catalysed reaction is a 1,2-diacyl-sn-glycero-3-phospho-L-serine + H(+) = a 1,2-diacyl-sn-glycero-3-phosphoethanolamine + CO2. It participates in phospholipid metabolism; phosphatidylethanolamine biosynthesis; phosphatidylethanolamine from CDP-diacylglycerol: step 2/2. Catalyzes the formation of phosphatidylethanolamine (PtdEtn) from phosphatidylserine (PtdSer). This is Phosphatidylserine decarboxylase proenzyme from Xanthobacter autotrophicus (strain ATCC BAA-1158 / Py2).